The primary structure comprises 527 residues: Pyruvate kinase 1, cytosolic (527 aa).

Arg-58 contacts substrate. K(+) contacts are provided by Asp-60, Ser-62, Asp-92, and Thr-93. 60-63 (DFSW) lines the ATP pocket. Lys-256 lines the substrate pocket. A Mg(2+)-binding site is contributed by Glu-258. Substrate is bound by residues Gly-281, Asn-282, and Thr-313. Asn-282 serves as a coordination point for Mg(2+).

This sequence belongs to the pyruvate kinase family. In terms of assembly, homotetramer. Mg(2+) is required as a cofactor. Requires K(+) as cofactor.

The protein localises to the cytoplasm. It is found in the cytosol. The enzyme catalyses pyruvate + ATP = phosphoenolpyruvate + ADP + H(+). It functions in the pathway carbohydrate degradation; glycolysis; pyruvate from D-glyceraldehyde 3-phosphate: step 5/5. Functionally, key regulatory enzyme of the glycolytic pathway that catalyzes the final step of glycolysis, converting ADP and phosphoenolpyruvate (PEP) to ATP and pyruvate by essentially irreversible transphosphorylation. Is critical for plant growth and development. This chain is Pyruvate kinase 1, cytosolic, found in Oryza sativa subsp. indica (Rice).